A 1111-amino-acid polypeptide reads, in one-letter code: Receptor-type guanylate cyclase gcy-7 (1111 aa).

The first 24 residues, 1–24 (MKPFYSMSLVLFLVITLLPKPMFP), serve as a signal peptide directing secretion. At 25 to 488 (QVATGTTGNV…CPKSFVDEYL (464 aa)) the chain is on the extracellular side. N-linked (GlcNAc...) asparagine glycosylation is found at asparagine 80, asparagine 300, asparagine 326, asparagine 353, asparagine 389, asparagine 407, asparagine 430, and asparagine 441. The helical transmembrane segment at 489-509 (IWVIVAIVVLFLAITAAACGI) threads the bilayer. Residues 510-1111 (YFSIQARRQE…TLKSDEQLSD (602 aa)) lie on the Cytoplasmic side of the membrane. The Protein kinase domain occupies 536-838 (QINSKQKGKG…NDNLMDHVFN (303 aa)). ATP-binding positions include 542 to 550 (KGKGEHSVR) and lysine 568. A Guanylate cyclase domain is found at 896–1026 (TIFFSDVVQF…DAVNTASRME (131 aa)).

Belongs to the adenylyl cyclase class-4/guanylyl cyclase family. As to expression, expressed asymmetrically in ASE left (ASEL) sensory neuron. Expressed in excretory canal cell.

The protein localises to the cell membrane. The catalysed reaction is GTP = 3',5'-cyclic GMP + diphosphate. Its function is as follows. Guanylate cyclase involved in the production of the second messenger cGMP. Unlike other guanylate cyclases expressed in ASE neurons, may not play a role in chemotaxis responses toward salt ions in ASEL (ASE left) sensory neurons. The polypeptide is Receptor-type guanylate cyclase gcy-7 (Caenorhabditis elegans).